A 122-amino-acid chain; its full sequence is Large ribosomal subunit protein uL14 (122 aa).

In terms of assembly, forms a cluster with proteins L3 and L19. In the 70S ribosome, L14 and L19 interact and together make contacts with the 16S rRNA in bridges B5 and B8. Part of the 50S ribosomal subunit.

Its function is as follows. Binds to 23S rRNA. Forms part of two intersubunit bridges in the 70S ribosome. This chain is Large ribosomal subunit protein uL14, found in Rhodopseudomonas palustris (strain ATCC BAA-98 / CGA009).